Here is a 204-residue protein sequence, read N- to C-terminus: Probable nicotinate-nucleotide adenylyltransferase (204 aa).

The protein belongs to the NadD family.

The catalysed reaction is nicotinate beta-D-ribonucleotide + ATP + H(+) = deamido-NAD(+) + diphosphate. It participates in cofactor biosynthesis; NAD(+) biosynthesis; deamido-NAD(+) from nicotinate D-ribonucleotide: step 1/1. Catalyzes the reversible adenylation of nicotinate mononucleotide (NaMN) to nicotinic acid adenine dinucleotide (NaAD). In Dehalococcoides mccartyi (strain ATCC BAA-2100 / JCM 16839 / KCTC 5957 / BAV1), this protein is Probable nicotinate-nucleotide adenylyltransferase.